Here is a 236-residue protein sequence, read N- to C-terminus: Probable metal transport system ATP-binding protein TC_0697 (236 aa).

The ABC transporter domain occupies 5–236 (LILENVSFRY…FCCNTFGKCS (232 aa)). 39-46 (GPNGGGKT) contacts ATP.

It belongs to the ABC transporter superfamily.

The protein resides in the cell inner membrane. Part of an ATP-driven transport system TC_0696/TC_0697/TC_0698 for a metal. Probably responsible for energy coupling to the transport system. The polypeptide is Probable metal transport system ATP-binding protein TC_0697 (Chlamydia muridarum (strain MoPn / Nigg)).